The chain runs to 211 residues: tRNA (guanine-N(7)-)-methyltransferase (211 aa).

S-adenosyl-L-methionine-binding residues include aspartate 40, glutamate 65, asparagine 92, and aspartate 118. Aspartate 118 is a catalytic residue. The substrate site is built by lysine 122 and aspartate 154.

It belongs to the class I-like SAM-binding methyltransferase superfamily. TrmB family.

It catalyses the reaction guanosine(46) in tRNA + S-adenosyl-L-methionine = N(7)-methylguanosine(46) in tRNA + S-adenosyl-L-homocysteine. It functions in the pathway tRNA modification; N(7)-methylguanine-tRNA biosynthesis. In terms of biological role, catalyzes the formation of N(7)-methylguanine at position 46 (m7G46) in tRNA. This Microcystis aeruginosa (strain NIES-843 / IAM M-2473) protein is tRNA (guanine-N(7)-)-methyltransferase.